Consider the following 76-residue polypeptide: Serine proteinase inhibitor IA-2 (76 aa).

S1 is modified (N-acetylserine).

It belongs to the protease inhibitor I9 family.

In terms of biological role, specifically inhibits an intracellular serine proteinase (proteinase A). The polypeptide is Serine proteinase inhibitor IA-2 (Pleurotus ostreatus (Oyster mushroom)).